We begin with the raw amino-acid sequence, 315 residues long: DNA-directed RNA polymerase subunit alpha (315 aa).

The alpha N-terminal domain (alpha-NTD) stretch occupies residues 1–228; sequence MLEIEKPKIE…EHLRLFIGLT (228 aa). Residues 246–315 form an alpha C-terminal domain (alpha-CTD) region; the sequence is DKILEMTIEE…LGLSLRQEDE (70 aa).

It belongs to the RNA polymerase alpha chain family. As to quaternary structure, homodimer. The RNAP catalytic core consists of 2 alpha, 1 beta, 1 beta' and 1 omega subunit. When a sigma factor is associated with the core the holoenzyme is formed, which can initiate transcription.

It carries out the reaction RNA(n) + a ribonucleoside 5'-triphosphate = RNA(n+1) + diphosphate. DNA-dependent RNA polymerase catalyzes the transcription of DNA into RNA using the four ribonucleoside triphosphates as substrates. This Desulforamulus reducens (strain ATCC BAA-1160 / DSM 100696 / MI-1) (Desulfotomaculum reducens) protein is DNA-directed RNA polymerase subunit alpha.